The following is a 685-amino-acid chain: N(6)-adenosine-methyltransferase MT-A70-like (685 aa).

S-adenosyl-L-methionine is bound by residues 464 to 465 and D482; that span reads DI. Residues 552 to 565 form a positively charged region required for RNA-binding region; the sequence is RIIRTGRTGHWLNH. S-adenosyl-L-methionine-binding positions include K599, 622-625, and 635-636; these read RMHN and NQ. Residues 657-685 form a disordered region; that stretch reads EIDVQPPSPPRASAMETDNEPMAIDSITA. Residue S664 is modified to Phosphoserine.

Belongs to the MT-A70-like family. In terms of assembly, interacts with FIP37. Interacts with MTB. Associates with MTB, FIP37, VIR and HAKAI to form the m6A writer complex which is essential for adenosine methylation at specific mRNA sequences.

The protein resides in the nucleus. It carries out the reaction an adenosine in mRNA + S-adenosyl-L-methionine = an N(6)-methyladenosine in mRNA + S-adenosyl-L-homocysteine + H(+). Functionally, catalytic subunit of the N6-methyltransferase complex, a multiprotein complex that mediates N6-methyladenosine (m6A) methylation at the 5'-[AG]GAC-3' consensus sites of some mRNAs. Associates with MTB, FIP37, VIR and HAKAI to form the m6A writer complex which is essential for adenosine methylation at specific mRNA sequences. N6-methyladenosine (m6A) plays a role in mRNA stability, processing, translation efficiency and editing. This Arabidopsis thaliana (Mouse-ear cress) protein is N(6)-adenosine-methyltransferase MT-A70-like.